We begin with the raw amino-acid sequence, 424 residues long: Calreticulin-3 (424 aa).

The N-terminal stretch at Met-1–Ser-28 is a signal peptide. Asn-97 is a glycosylation site (N-linked (GlcNAc...) asparagine). The cysteines at positions 114 and 146 are disulfide-linked. Residues Tyr-118, Lys-120, Tyr-137, and Asp-144 each coordinate an alpha-D-glucoside. 7 consecutive repeat copies span residues Arg-200–Ile-211, Val-219–Asp-230, Asp-236–Ser-247, Asp-254–Glu-265, Gly-269–Ser-279, Gly-283–Pro-293, and Gly-297–Pro-307. The segment at Arg-200–Glu-265 is 4 X approximate repeats. Acidic residues predominate over residues Trp-228–Pro-237. Positions Trp-228–Lys-275 are disordered. The span at Asn-238 to Pro-260 shows a compositional bias: basic and acidic residues. The tract at residues Gly-269–Pro-307 is 3 X approximate repeats. Glu-327 provides a ligand contact to an alpha-D-glucoside. Positions Phe-368 to Tyr-401 are enriched in basic and acidic residues. The segment at Phe-368–Leu-424 is disordered. Residues Gly-402–Pro-411 are compositionally biased toward basic residues. Residues Asn-412–Leu-424 show a composition bias toward basic and acidic residues. Residues His-421 to Leu-424 carry the Prevents secretion from ER motif.

The protein belongs to the calreticulin family.

It is found in the endoplasmic reticulum lumen. Molecular calcium-binding chaperone promoting folding, oligomeric assembly and quality control in the ER via the calreticulin/calnexin cycle. This lectin may interact transiently with almost all of the monoglucosylated glycoproteins that are synthesized in the ER. Required for elongation factor Tu receptor (EFR) accumulation and for EFR, but not flagellin-sensing 2 (FLS2) signaling. In Arabidopsis thaliana (Mouse-ear cress), this protein is Calreticulin-3 (CRT3).